A 331-amino-acid chain; its full sequence is Serine/threonine-protein phosphatase 6 catalytic subunit (331 aa).

4 residues coordinate Mn(2+): aspartate 79, histidine 81, aspartate 107, and asparagine 139. Catalysis depends on histidine 140, which acts as the Proton donor. Histidine 189 and histidine 264 together coordinate Mn(2+).

This sequence belongs to the PPP phosphatase family. PP-6 (PP-V) subfamily. As to quaternary structure, forms a complex composed of catalytic subunit pph-6 and regulatory subunit saps-1; the interaction increases pph-6 and saps-1 protein stability. It depends on Mn(2+) as a cofactor.

Its subcellular location is the cytoplasm. The protein localises to the cell cortex. The protein resides in the cytoskeleton. It is found in the spindle pole. It catalyses the reaction O-phospho-L-seryl-[protein] + H2O = L-seryl-[protein] + phosphate. It carries out the reaction O-phospho-L-threonyl-[protein] + H2O = L-threonyl-[protein] + phosphate. Its function is as follows. Catalytic subunit of protein phosphatase 6 (PP6). In complex with saps-1, promotes actomyosin contractility during cytokinesis by regulating the organization of cortical non-muscle myosin II nmy-2 and thus contributing to correct spindle positioning. Also required for the proper generation of pulling forces on spindle poles during anaphase by regulating the cortical localization of gpr-1, gpr-2 and lin-5. The protein is Serine/threonine-protein phosphatase 6 catalytic subunit of Caenorhabditis elegans.